A 532-amino-acid chain; its full sequence is BTB/POZ domain-containing protein 3 (532 aa).

Residues 23-54 are disordered; sequence KNRSKKSSKKTNTGGGGGGSSSSSSSSSNSKL. The span at 43–53 shows a compositional bias: low complexity; it reads SSSSSSSSNSK. A BTB domain is found at 130 to 200; it reads ADVHFVVGPP…IYCDEIDLAA (71 aa). Positions 245 to 310 constitute a BACK domain; sequence FEEPDLTQRC…NWAEVECQRQ (66 aa).

In terms of tissue distribution, expressed in visual cortex. Expressed in visual cortex layer IV neurons.

The protein localises to the cytoplasm. It localises to the cytosol. Its subcellular location is the nucleus. In terms of biological role, acts as a key regulator of dendritic field orientation during development of sensory cortex. Also directs dendrites toward active axon terminals when ectopically expressed. In Mustela putorius furo (European domestic ferret), this protein is BTB/POZ domain-containing protein 3 (BTBD3).